Reading from the N-terminus, the 443-residue chain is Xaa-Pro dipeptidase (443 aa).

Mn(2+)-binding residues include aspartate 246, aspartate 257, histidine 339, glutamate 384, and glutamate 423.

This sequence belongs to the peptidase M24B family. Bacterial-type prolidase subfamily. Mn(2+) is required as a cofactor.

It catalyses the reaction Xaa-L-Pro dipeptide + H2O = an L-alpha-amino acid + L-proline. Functionally, splits dipeptides with a prolyl residue in the C-terminal position. The sequence is that of Xaa-Pro dipeptidase from Shigella flexneri serotype 5b (strain 8401).